Reading from the N-terminus, the 439-residue chain is uncharacterized protein (439 aa).

The N-terminal stretch at 1-22 (MWVALKRFGFLSGLLALTVLSA) is a signal peptide. Cysteine 23 is lipidated: N-palmitoyl cysteine. Cysteine 23 carries the S-diacylglycerol cysteine lipid modification.

This sequence belongs to the MG067/MG068/MG395 family.

It localises to the cell membrane. This is an uncharacterized protein from Mycoplasma pneumoniae (strain ATCC 29342 / M129 / Subtype 1) (Mycoplasmoides pneumoniae).